Here is a 442-residue protein sequence, read N- to C-terminus: UDP-N-acetylmuramoylalanine--D-glutamate ligase (442 aa).

ATP is bound at residue 109–115 (GSNGKTT).

The protein belongs to the MurCDEF family.

Its subcellular location is the cytoplasm. It catalyses the reaction UDP-N-acetyl-alpha-D-muramoyl-L-alanine + D-glutamate + ATP = UDP-N-acetyl-alpha-D-muramoyl-L-alanyl-D-glutamate + ADP + phosphate + H(+). It participates in cell wall biogenesis; peptidoglycan biosynthesis. Cell wall formation. Catalyzes the addition of glutamate to the nucleotide precursor UDP-N-acetylmuramoyl-L-alanine (UMA). The protein is UDP-N-acetylmuramoylalanine--D-glutamate ligase of Solibacter usitatus (strain Ellin6076).